The sequence spans 436 residues: MSRVRFDLDTLKRLAQFAAQRSSEDRIPQVAGSLTFTTMLSLVPLATVAFALFTAFPIFASFQMSLQIFLADHLMPAQLNSQIFNYLNQFASKAKGLTTIGMIFLFVTAVMTMMTVESAFNVIWRVRKARPIAQRILVYWAIITLGPILIGVSLSISSYLFTQSMTFTAAQRMTPVIEWALAGAALPLTAAAFTILYVYLPNCRVEWRDAVIGGVTAAIAFELAKRGFGYYVRRIPTYTAVYGAFAAVPLFLLWMYLCWFITLAGAMIASALPAIRIGQFHRPTFEGSNLFDSLELLARLSEARDAGKRGYTVPELSRMLRRDMGTTINLLEKLEEIEWIARLQEDGARPHFLLLANPAQITVERLFGLFVIDRAELGYQLELASTRVDGEMLLAALENDKLKVTLAALLTARAAARAAQAAENESGTSSMPHQAA.

6 helical membrane-spanning segments follow: residues 42-62 (LVPLATVAFALFTAFPIFASF), 96-116 (GLTTIGMIFLFVTAVMTMMTV), 136-156 (ILVYWAIITLGPILIGVSLSI), 180-200 (ALAGAALPLTAAAFTILYVYL), 210-230 (AVIGGVTAAIAFELAKRGFGY), and 241-261 (VYGAFAAVPLFLLWMYLCWFI).

This sequence belongs to the UPF0761 family.

The protein localises to the cell inner membrane. The polypeptide is UPF0761 membrane protein Bxeno_A3061 (Paraburkholderia xenovorans (strain LB400)).